Consider the following 367-residue polypeptide: Peptide chain release factor 2 (367 aa).

Gln-254 is modified (N5-methylglutamine).

It belongs to the prokaryotic/mitochondrial release factor family. Post-translationally, methylated by PrmC. Methylation increases the termination efficiency of RF2.

Its subcellular location is the cytoplasm. In terms of biological role, peptide chain release factor 2 directs the termination of translation in response to the peptide chain termination codons UGA and UAA. The sequence is that of Peptide chain release factor 2 from Bordetella bronchiseptica (strain ATCC BAA-588 / NCTC 13252 / RB50) (Alcaligenes bronchisepticus).